We begin with the raw amino-acid sequence, 196 residues long: DnaA initiator-associating protein DiaA (196 aa).

An SIS domain is found at 34–196; sequence LVQSLLNGNK…DNTLFPHQDD (163 aa).

This sequence belongs to the SIS family. DiaA subfamily. Homotetramer; dimer of dimers.

Functionally, required for the timely initiation of chromosomal replication via direct interactions with the DnaA initiator protein. This chain is DnaA initiator-associating protein DiaA, found in Yersinia pseudotuberculosis serotype O:1b (strain IP 31758).